The primary structure comprises 593 residues: ETS-related transcription factor Elf-2 (593 aa).

S107 is modified (phosphoserine). The tract at residues 146 to 201 is disordered; it reads VEVSTEESEPMDTSPIPTSPDSHEPMKKKKVGRKPKTQQSPISNGSPELGIKKKPR. The segment covering 171–181 has biased composition (basic residues); that stretch reads MKKKKVGRKPK. Phosphothreonine is present on T182. Residues 182–191 are compositionally biased toward polar residues; that stretch reads TQQSPISNGS. 2 positions are modified to phosphoserine: S185 and S191. The segment at residues 208–290 is a DNA-binding region (ETS); the sequence is TYLWEFLLDL…EGQRLVYQFK (83 aa). Phosphoserine occurs at positions 363 and 372. Position 376 is a phosphothreonine (T376). S430 is modified (phosphoserine). Position 494 is an omega-N-methylarginine (R494). Residue T521 is modified to Phosphothreonine. K536 participates in a covalent cross-link: Glycyl lysine isopeptide (Lys-Gly) (interchain with G-Cter in SUMO2).

It belongs to the ETS family. Interacts with the LIM domains of LMO2. Interacts via its N-terminal region with RUNX1. As to expression, expressed in all fetal and adult tissues examined. Among fetal tissues, highest levels of expression detected in heart, lung, liver and kidney, and lower levels in brain. Among adult tissues, highest levels of expression detected in heart, placenta, lung, skeletal muscle, spleen, thymus, testis and ovary. Moderate expression in prostate, small intestine, kidney, liver and pancreas, and weak expression in colon, brain and peripheral blood lymphocytes.

It localises to the nucleus. In terms of biological role, isoform 1 transcriptionally activates the LYN and BLK promoters and acts synergistically with RUNX1 to transactivate the BLK promoter. Functionally, isoform 2 may function in repression of RUNX1-mediated transactivation. This Homo sapiens (Human) protein is ETS-related transcription factor Elf-2.